Consider the following 416-residue polypeptide: Serine hydroxymethyltransferase (416 aa).

Residues Leu119 and 123–125 (GHL) each bind (6S)-5,6,7,8-tetrahydrofolate. Position 228 is an N6-(pyridoxal phosphate)lysine (Lys228).

This sequence belongs to the SHMT family. Homodimer. Pyridoxal 5'-phosphate serves as cofactor.

The protein resides in the cytoplasm. It carries out the reaction (6R)-5,10-methylene-5,6,7,8-tetrahydrofolate + glycine + H2O = (6S)-5,6,7,8-tetrahydrofolate + L-serine. Its pathway is one-carbon metabolism; tetrahydrofolate interconversion. It participates in amino-acid biosynthesis; glycine biosynthesis; glycine from L-serine: step 1/1. Functionally, catalyzes the reversible interconversion of serine and glycine with tetrahydrofolate (THF) serving as the one-carbon carrier. This reaction serves as the major source of one-carbon groups required for the biosynthesis of purines, thymidylate, methionine, and other important biomolecules. Also exhibits THF-independent aldolase activity toward beta-hydroxyamino acids, producing glycine and aldehydes, via a retro-aldol mechanism. The protein is Serine hydroxymethyltransferase of Moorella thermoacetica (strain ATCC 39073 / JCM 9320).